The primary structure comprises 82 residues: Capsid protein G8P (82 aa).

Residues 1–29 form the signal peptide; sequence MRVLSTVLAAKNKIALGAATMLVSAGSFA. Topologically, residues 30–54 are periplasmic; sequence AEPNAATNYATEAMDSLKTQAIDLI. Residues 55 to 74 form a helical membrane-spanning segment; that stretch reads SQTWPVVTTVVVAGLVIRLF. The Cytoplasmic segment spans residues 75–82; sequence KKFSSKAV.

It belongs to the inovirus capsid protein family. As to quaternary structure, homomultimerizes. There are several thousands of this protein in the phage capsid.

It localises to the virion. It is found in the host membrane. Self assembles to form a helical capsid wrapping up the viral genomic DNA. The capsid displays a filamentous structure with a length of 760-1950 nm and a width of 6-8 nm. The virion assembly and budding take place at the host inner membrane. The polypeptide is Capsid protein G8P (VIII) (Salmonella phage IKe (Bacteriophage IKe)).